The primary structure comprises 150 residues: MSGKILDKMAGLLGLEDDLEEDLEEVEEETAEEEVTPLISSNTKRNNKVVSIHTAVSAKVKIIKPCSYEEAVDICDELKNRKIIIVNTTDLETKIAQRLLDFMGGASYALGGSLEEVEKSVYILAPSTVEVTNELKSQLISSKGIFNWNK.

Belongs to the SepF family. Homodimer. Interacts with FtsZ.

It is found in the cytoplasm. In terms of biological role, cell division protein that is part of the divisome complex and is recruited early to the Z-ring. Probably stimulates Z-ring formation, perhaps through the cross-linking of FtsZ protofilaments. Its function overlaps with FtsA. The chain is Cell division protein SepF from Clostridium botulinum (strain ATCC 19397 / Type A).